We begin with the raw amino-acid sequence, 479 residues long: PRAME family member 19 (479 aa).

Residues 15–38 form an LRR 1 repeat; the sequence is QSLLRDQALAISVLDELPRELFPR. An LRR 1; degenerate repeat occupies 97 to 124; sequence RWKLQVLEMRDVDENFWTIWSGARPLSC. The stretch at 179–203 is one LRR 2; degenerate repeat; the sequence is HLCCTKVVNYSMNILNFRNILETVY. The stretch at 204–230 is one LRR 3; degenerate repeat; sequence PDSIQVLEIWNMCWPCMVAEVSRYLSQ. An LRR 4; degenerate repeat occupies 231-265; sequence MKNLRKLFISDGCGYLPSFESQGQLVAEFSSVFLR. 5 LRR repeats span residues 266–291, 292–323, 324–342, 348–375, and 376–400; these read LEYL…IRCL, KSPL…SQLK, QLNL…PLRA, AATL…ALSR, and CSNL…LLRH.

Belongs to the PRAME family.

The protein is PRAME family member 19 of Homo sapiens (Human).